A 35-amino-acid chain; its full sequence is MSDINATRLPIIIVLGLIIPLCVSDIEMILTRGER.

A propeptide spanning residues 1-10 (MSDINATRLP) is cleaved from the precursor. Residues 11-20 (IIIVLGLIIP) constitute a cross-link (cyclopeptide (Ile-Pro)). A propeptide spanning residues 21–35 (LCVSDIEMILTRGER) is cleaved from the precursor.

Belongs to the MSDIN fungal toxin family. Post-translationally, processed by the macrocyclase-peptidase enzyme POPB to yield a toxic cyclic decapeptide. POPB first removes 10 residues from the N-terminus. Conformational trapping of the remaining peptide forces the enzyme to release this intermediate rather than proceed to macrocyclization. The enzyme rebinds the remaining peptide in a different conformation and catalyzes macrocyclization of the N-terminal 10 residues.

In terms of biological role, probable toxin that belongs to the MSDIN-like toxin family responsible for a large number of food poisoning cases and deaths. The chain is MSDIN-like toxin proprotein 1 from Amanita rimosa.